A 469-amino-acid chain; its full sequence is Ribulose bisphosphate carboxylase large chain (469 aa).

Lys-5 carries the post-translational modification N6,N6,N6-trimethyllysine. Substrate contacts are provided by Asn-114 and Thr-164. Catalysis depends on Lys-166, which acts as the Proton acceptor. Lys-168 contributes to the substrate binding site. Positions 192, 194, and 195 each coordinate Mg(2+). Lys-192 carries the post-translational modification N6-carboxylysine. His-285 (proton acceptor) is an active-site residue. Substrate contacts are provided by Arg-286, His-318, and Ser-370.

The protein belongs to the RuBisCO large chain family. Type I subfamily. Heterohexadecamer of 8 large chains and 8 small chains; disulfide-linked. The disulfide link is formed within the large subunit homodimers. Mg(2+) serves as cofactor. Post-translationally, the disulfide bond which can form in the large chain dimeric partners within the hexadecamer appears to be associated with oxidative stress and protein turnover.

The protein localises to the plastid. It localises to the chloroplast. It carries out the reaction 2 (2R)-3-phosphoglycerate + 2 H(+) = D-ribulose 1,5-bisphosphate + CO2 + H2O. The catalysed reaction is D-ribulose 1,5-bisphosphate + O2 = 2-phosphoglycolate + (2R)-3-phosphoglycerate + 2 H(+). Functionally, ruBisCO catalyzes two reactions: the carboxylation of D-ribulose 1,5-bisphosphate, the primary event in carbon dioxide fixation, as well as the oxidative fragmentation of the pentose substrate in the photorespiration process. Both reactions occur simultaneously and in competition at the same active site. In Cephalanthus occidentalis (Common buttonbush), this protein is Ribulose bisphosphate carboxylase large chain.